Here is a 122-residue protein sequence, read N- to C-terminus: MIQQQTLLKVGDNTGARKLMCIRVLGGSKRRYASVGDVIIASVKEATPGGVVKKGDVVRAVVVRTKKAVKRPDGSYIRFNENAAVIINEQNNPRGTRIFGPVARELREKDFMKIISLAPEVL.

This sequence belongs to the universal ribosomal protein uL14 family. Part of the 50S ribosomal subunit. Forms a cluster with proteins L3 and L19. In the 70S ribosome, L14 and L19 interact and together make contacts with the 16S rRNA in bridges B5 and B8.

Its function is as follows. Binds to 23S rRNA. Forms part of two intersubunit bridges in the 70S ribosome. The polypeptide is Large ribosomal subunit protein uL14 (Moorella thermoacetica (strain ATCC 39073 / JCM 9320)).